We begin with the raw amino-acid sequence, 578 residues long: Triokinase/FMN cyclase (578 aa).

Residues 9-336 (SVEGCAGDAL…IDAETNAKAW (328 aa)) form the DhaK domain. Residues 56–59 (GSGH), Lys109, and Asp114 each bind dihydroxyacetone. Residue His221 is the Tele-hemiaminal-histidine intermediate of the active site. The DhaL domain maps to 372–571 (KQMTLVLDRI…AAAIFRAILE (200 aa)). Residues 401-404 (DGDC), 446-447 (SS), Gly486, and 494-495 (TM) contribute to the ATP site. A phosphoserine mark is found at Ser511 and Ser545. ATP is bound at residue 556–558 (DPG).

It belongs to the dihydroxyacetone kinase (DAK) family. Homodimer. Interacts with IFIH1 (via the CARD domains), the interaction is inhibited by viral infection. The cofactor is Mg(2+). It depends on Mn(2+) as a cofactor. Co(2+) serves as cofactor.

It catalyses the reaction dihydroxyacetone + ATP = dihydroxyacetone phosphate + ADP + H(+). It carries out the reaction D-glyceraldehyde + ATP = D-glyceraldehyde 3-phosphate + ADP + H(+). The catalysed reaction is FAD = riboflavin cyclic-4',5'-phosphate + AMP + H(+). Its activity is regulated as follows. Each activity is inhibited by the substrate(s) of the other. Catalyzes both the phosphorylation of dihydroxyacetone and of glyceraldehyde, and the splitting of ribonucleoside diphosphate-X compounds among which FAD is the best substrate. Represses IFIH1-mediated cellular antiviral response. The chain is Triokinase/FMN cyclase (Tkfc) from Rattus norvegicus (Rat).